A 544-amino-acid chain; its full sequence is GDP-mannose 4,6-dehydratase sdnI (544 aa).

NADP(+) is bound by residues 16–21, Arg41, 64–65, and 86–90; these read GITGQD, DM, and LAAQS. Ser90 contributes to the substrate binding site. Active-site nucleophile residues include Glu135 and Tyr157. Tyr157 contacts substrate. Lys161 contacts NADP(+). Asn186 contacts substrate. His187 and Arg192 together coordinate NADP(+). Substrate contacts are provided by residues 192–200, Gly219, Arg225, and 303–306; these read RGTTFVTRK and RPVE. Residues 366–406 are disordered; the sequence is GETTSAVNSSPSSTAGDTYKASDGWSTSGAEGSEQTECSSV. Polar residues-rich tracts occupy residues 368-381 and 389-404; these read TTSA…STAG and GWST…TECS.

Belongs to the NAD(P)-dependent epimerase/dehydratase family. GDP-mannose 4,6-dehydratase subfamily. The cofactor is NADP(+).

It carries out the reaction GDP-alpha-D-mannose = GDP-4-dehydro-alpha-D-rhamnose + H2O. It participates in antibiotic biosynthesis. GDP-mannose 4,6-dehydratase; part of the gene cluster that mediates the biosynthesis of sordarin and hypoxysordarin, glycoside antibiotics with a unique tetracyclic diterpene aglycone structure. First, the geranylgeranyl diphosphate synthase sdnC constructs GGDP from farnesyl diphosphate and isopentenyl diphosphate. The diterpene cyclase sdnA then catalyzes the cyclization of GGDP to afford cycloaraneosene. Cycloaraneosene is then hydroxylated four times by the putative cytochrome P450 monooxygenases sdnB, sdnE, sdnF and sdnH to give a hydroxylated cycloaraneosene derivative such as cycloaraneosene-8,9,13,19-tetraol. Although the order of the hydroxylations is unclear, at least C8, C9 and C13 of the cycloaraneosene skeleton are hydroxylated before the sordaricin formation. Dehydration of the 13-hydroxy group of the hydroxylated cycloaraneosene derivative might be catalyzed by an unassigned hypothetical protein such as sdnG and sdnP to construct the cyclopentadiene moiety. The FAD-dependent oxidoreductase sdnN is proposed to catalyze the oxidation at C9 of the hydroxylated cycloaraneosene derivative and also catalyze the Baeyer-Villiger oxidation to give the lactone intermediate. The presumed lactone intermediate would be hydrolyzed to give an acrolein moiety and a carboxylate moiety. Then, [4+2]cycloaddition would occur between the acrolein moiety and the cyclopentadiene moiety to give sordaricin. SdnN might also be involved in the [4+2]cycloaddition after the hypothesized oxidation to accommodate the oxidized product and prompt the [4+2]cycloaddition. GDP-6-deoxy-D-altrose may be biosynthesized from GDP-D-mannose by the putative GDP-mannose-4,6-dehydratase sdnI and the short-chain dehydrogenase sdnK. The glycosyltransferase sdnJ catalyzes the attachment of 6-deoxy-D-altrose onto the 19-hydroxy group of sordaricin to give 4'-O-demethylsordarin. The methyltransferase sdnD would complete the biosynthesis of sordarin. Sordarin can be further modified into hypoxysordarin. The unique acyl chain at the 3'-hydroxy group of hypoxysordarin would be constructed by an iterative type I PKS sdnO and the trans-acting polyketide methyltransferase sdnL. SdnL would be responsible for the introduction of an alpha-methyl group of the polyketide chain. Alternatively, the beta-lactamase-like protein sdnR might be responsible for the cleavage and transfer of the polyketide chain from the PKS sdnO to sordarin. Two putative cytochrome P450 monooxygenases, sdnQ and sdnT, might catalyze the epoxidations of the polyketide chain to complete the biosynthesis of hypoxysordarin. Transcriptional regulators sdnM and sdnS are presumably encoded for the transcriptional regulation of the expression of the sdn gene cluster. In Sordaria araneosa (Pleurage araneosa), this protein is GDP-mannose 4,6-dehydratase sdnI.